A 292-amino-acid chain; its full sequence is AKT-interacting protein (292 aa).

Polar residues predominate over residues 1-11; it reads MNPFWSMSTSS. Positions 1–63 are disordered; sequence MNPFWSMSTS…TSPAPAAQST (63 aa). The span at 14–23 shows a compositional bias: basic and acidic residues; it reads KRSEGEEKTL. Phosphoserine is present on Ser30. Residues 74–222 form the UBC core domain; that stretch reads YLEYSLLAEF…VVDSVKVCTA (149 aa).

The protein belongs to the ubiquitin-conjugating enzyme family. FTS subfamily. In terms of assembly, component of the FTS/Hook/FHIP complex (FHF complex), composed of AKTIP/FTS, FHIP1B, and one or more members of the Hook family of proteins HOOK1, HOOK2, and HOOK3. Interacts directly with HOOK1, HOOK2 and HOOK3. The FHF complex associates with the homotypic vesicular sorting complex (the HOPS complex). Also interacts with AKT1. May interact with FHIP1A.

The protein localises to the cytoplasm. It is found in the cell membrane. Component of the FTS/Hook/FHIP complex (FHF complex). The FHF complex may function to promote vesicle trafficking and/or fusion via the homotypic vesicular protein sorting complex (the HOPS complex). Regulates apoptosis by enhancing phosphorylation and activation of AKT1. Increases release of TNFSF6 via the AKT1/GSK3B/NFATC1 signaling cascade. FHF complex promotes the distribution of AP-4 complex to the perinuclear area of the cell. The chain is AKT-interacting protein from Homo sapiens (Human).